Consider the following 188-residue polypeptide: UPF0461 protein C5orf24 homolog (188 aa).

Serine 37 carries the phosphoserine modification. Lysine 75 participates in a covalent cross-link: Glycyl lysine isopeptide (Lys-Gly) (interchain with G-Cter in SUMO2). Residues 80–92 (KKKNLNRSGKRGR) are compositionally biased toward basic residues. Residues 80 to 141 (KKKNLNRSGK…AGYKVSPGRP (62 aa)) form a disordered region. Positions 94 to 107 (SGTTKSAGYRTSTG) are enriched in polar residues. Serine 121 and serine 180 each carry phosphoserine. A Glycyl lysine isopeptide (Lys-Gly) (interchain with G-Cter in SUMO2) cross-link involves residue lysine 184.

It belongs to the UPF0461 family.

In Mus musculus (Mouse), this protein is UPF0461 protein C5orf24 homolog.